The chain runs to 211 residues: Leucine efflux protein (211 aa).

The next 6 membrane-spanning stretches (helical) occupy residues 5-25 (FGVLNFWTYVVGAFFIVLVPG), 49-69 (GVFIGDAVLMFLAWAGVAALI), 72-92 (TPVLFNIVRYLGALYLLWLGG), 122-142 (VLSLTNPKAILFYVSFFVQFI), 153-173 (FLILATTLELISFMYMSFLIF), and 191-211 (LGNGLIGLLFVGFAARLASLH).

Belongs to the Rht family.

The protein localises to the cell inner membrane. The catalysed reaction is L-leucine(in) + H(+)(out) = L-leucine(out) + H(+)(in). Exporter of leucine. This is Leucine efflux protein (leuE) from Enterobacter sp. (strain 638).